A 445-amino-acid polypeptide reads, in one-letter code: GTPase Der (445 aa).

2 EngA-type G domains span residues 3 to 167 and 180 to 353; these read PVIA…YAGQ and IKIA…AAAM. GTP is bound by residues 9 to 16, 56 to 60, 119 to 122, 186 to 193, 233 to 237, and 298 to 301; these read GRPNVGKS, DTGGF, NKAE, DTAGL, and NKWD. Residues 354 to 438 enclose the KH-like domain; the sequence is AKLPTPKLTR…PLRIEFRSSN (85 aa).

This sequence belongs to the TRAFAC class TrmE-Era-EngA-EngB-Septin-like GTPase superfamily. EngA (Der) GTPase family. As to quaternary structure, associates with the 50S ribosomal subunit.

Functionally, GTPase that plays an essential role in the late steps of ribosome biogenesis. This Burkholderia vietnamiensis (strain G4 / LMG 22486) (Burkholderia cepacia (strain R1808)) protein is GTPase Der.